Here is a 774-residue protein sequence, read N- to C-terminus: Beta-xylosidase/alpha-L-arabinofuranosidase 1 (774 aa).

A signal peptide spans 1–33 (ANTKNREPKVSSVFLCFSIFYVTVLLNCNHVYG). Residues asparagine 48 and asparagine 136 are each glycosylated (N-linked (GlcNAc...) asparagine). Aspartate 303 is a catalytic residue. Residues asparagine 437 and asparagine 530 are each glycosylated (N-linked (GlcNAc...) asparagine).

It belongs to the glycoside hydrolase 3 family. Proteolytically cleaved in roots to form a 65 kDa protein.

Its subcellular location is the secreted. It localises to the extracellular space. The protein resides in the extracellular matrix. It catalyses the reaction Hydrolysis of (1-&gt;4)-beta-D-xylans, to remove successive D-xylose residues from the non-reducing termini.. The enzyme catalyses Hydrolysis of terminal non-reducing alpha-L-arabinofuranoside residues in alpha-L-arabinosides.. Functionally, a bifunctional beta-xylosidase/alpha-L-arabinosidase, exo-enzyme that acts synergistically with endohydrolases. Releases xylose and arabinose from cell walls. Does not cleave xylan from oat spelts although xylan from oat spelts was degraded to xylose when this enzyme was used in combination with xylanase. Also releases xylose and arabinose from aryl glycosides, xylo-oligosaccharides, arabinan from sugar beet and arabino-oligosaccharides, arabinan from sugar beet and arabinoxylan from wheat. The polypeptide is Beta-xylosidase/alpha-L-arabinofuranosidase 1 (Medicago sativa subsp. varia (Alfalfa)).